Here is a 785-residue protein sequence, read N- to C-terminus: Disintegrin and metalloproteinase domain-containing protein B (785 aa).

Positions 1 to 26 (MRFLKSALPFVASALSLLSVQAAARS) are cleaved as a signal peptide. The Extracellular portion of the chain corresponds to 27-703 (QEPSAIQHVS…GSWVEQHKNL (677 aa)). One can recognise a Peptidase M12B domain in the interval 279–507 (KQVALVGIAA…NSVKSSCLSD (229 aa)). N-linked (GlcNAc...) asparagine glycans are attached at residues Asn322, Asn329, and Asn355. 2 disulfides stabilise this stretch: Cys398–Cys492 and Cys446–Cys464. Zn(2+) is bound at residue His429. Glu430 is an active-site residue. Positions 433 and 439 each coordinate Zn(2+). The Disintegrin domain occupies 516-605 (GSQCGNGIVE…TCPADSFKKD (90 aa)). Asn561, Asn593, and Asn640 each carry an N-linked (GlcNAc...) asparagine glycan. Cys577 and Cys597 are disulfide-bonded. The chain crosses the membrane as a helical span at residues 704–724 (VIGVACGVGGLLVLSILWCMI). The Cytoplasmic segment spans residues 725-785 (NRCRRARTVV…GPYQSATRYA (61 aa)). Residues 737–785 (PPMRPWPGPMPPPPPQMGQWAGPNRGYQGLRAEPPPPYPGPYQSATRYA) form a disordered region. The span at 739–752 (MRPWPGPMPPPPPQ) shows a compositional bias: pro residues.

Requires Zn(2+) as cofactor.

It is found in the membrane. Functionally, probable zinc protease. This is Disintegrin and metalloproteinase domain-containing protein B (ADM-B) from Aspergillus fumigatus (strain ATCC MYA-4609 / CBS 101355 / FGSC A1100 / Af293) (Neosartorya fumigata).